The chain runs to 355 residues: MHNPLSILLRPAALGYRVIVQLRNTLFDRQLLPAWKSPVPIVSIGNLSVGGTGKTPLVDWVVKYYLSIGCKPAIISRGYRRESKGVQLVSDGQKVLLSSSESGDETAMLAWNNPDAIVIVAKKRKEAVKYLVKHFAARMPSVIILDDAFQHRQIQRELNIAIINVSEPFLKARMLPEGRMREPLKNLSRADLIVLNKIDDPEKADAIVRKIKERGTPLIKARVAIAELVCFSGAFISSEEAPPLTSISALAFAGISSPQSFLDSLGKEGVTIAAHRFFYDHEPYSAKKLTEIFREAESKGLSLITTEKDYFRMLGHPELIRIITARPCYYLKIKTDIFEGKEILQSMLRKAVAMK.

48–55 (SVGGTGKT) contacts ATP.

This sequence belongs to the LpxK family.

The catalysed reaction is a lipid A disaccharide + ATP = a lipid IVA + ADP + H(+). The protein operates within glycolipid biosynthesis; lipid IV(A) biosynthesis; lipid IV(A) from (3R)-3-hydroxytetradecanoyl-[acyl-carrier-protein] and UDP-N-acetyl-alpha-D-glucosamine: step 6/6. Functionally, transfers the gamma-phosphate of ATP to the 4'-position of a tetraacyldisaccharide 1-phosphate intermediate (termed DS-1-P) to form tetraacyldisaccharide 1,4'-bis-phosphate (lipid IVA). The chain is Tetraacyldisaccharide 4'-kinase from Pelodictyon phaeoclathratiforme (strain DSM 5477 / BU-1).